A 367-amino-acid chain; its full sequence is Glutamate 5-kinase (367 aa).

Lys-9 is an ATP binding site. 3 residues coordinate substrate: Ser-49, Asp-136, and Asn-148. Residues Thr-168 to Asp-169 and Thr-210 to Lys-216 each bind ATP. Residues Ser-276 to Arg-350 form the PUA domain.

Belongs to the glutamate 5-kinase family.

It localises to the cytoplasm. It catalyses the reaction L-glutamate + ATP = L-glutamyl 5-phosphate + ADP. Its pathway is amino-acid biosynthesis; L-proline biosynthesis; L-glutamate 5-semialdehyde from L-glutamate: step 1/2. Its function is as follows. Catalyzes the transfer of a phosphate group to glutamate to form L-glutamate 5-phosphate. This Bacillus cereus (strain ATCC 14579 / DSM 31 / CCUG 7414 / JCM 2152 / NBRC 15305 / NCIMB 9373 / NCTC 2599 / NRRL B-3711) protein is Glutamate 5-kinase.